The sequence spans 218 residues: Probable chemoreceptor glutamine deamidase CheD (218 aa).

It belongs to the CheD family.

The enzyme catalyses L-glutaminyl-[protein] + H2O = L-glutamyl-[protein] + NH4(+). Probably deamidates glutamine residues to glutamate on methyl-accepting chemotaxis receptors (MCPs), playing an important role in chemotaxis. The chain is Probable chemoreceptor glutamine deamidase CheD from Saccharophagus degradans (strain 2-40 / ATCC 43961 / DSM 17024).